The primary structure comprises 305 residues: MIRQRTLKEIVKTTGVGLHSGRKVTLTLRPAAANTGIIYRRTDVNPPVDFPADPASVRDTMLCTALVNDEGVRISTVEHLNAALAGMGIDNIIVEVDAPEIPIMDGSASPFVYLLQQAGIEMQNVPKRFIRIKKPVRFEDGDKWAEFVPFNGFRMDFEIDFNHPAIESDEQRLLFDFSSQGFVREISRARTFGFMRDIEYLQSQNLVLGGSFDNAIVLDDYRILNEEGLRFENEFVTHKVLDAIGDLYMCGHPIIGEFRAYKSGHGLNNQLLRAVLADQEAWEWTTFEEEVGSPVAFAEPNMVLA.

Zn(2+) contacts are provided by His79, His238, and Asp242. Catalysis depends on His265, which acts as the Proton donor.

Belongs to the LpxC family. Requires Zn(2+) as cofactor.

The catalysed reaction is a UDP-3-O-[(3R)-3-hydroxyacyl]-N-acetyl-alpha-D-glucosamine + H2O = a UDP-3-O-[(3R)-3-hydroxyacyl]-alpha-D-glucosamine + acetate. Its pathway is glycolipid biosynthesis; lipid IV(A) biosynthesis; lipid IV(A) from (3R)-3-hydroxytetradecanoyl-[acyl-carrier-protein] and UDP-N-acetyl-alpha-D-glucosamine: step 2/6. Its function is as follows. Catalyzes the hydrolysis of UDP-3-O-myristoyl-N-acetylglucosamine to form UDP-3-O-myristoylglucosamine and acetate, the committed step in lipid A biosynthesis. This Vibrio parahaemolyticus serotype O3:K6 (strain RIMD 2210633) protein is UDP-3-O-acyl-N-acetylglucosamine deacetylase.